The sequence spans 329 residues: tRNA pseudouridine synthase B (329 aa).

Residue His-43 participates in substrate binding. Asp-48 (nucleophile) is an active-site residue. 3 residues coordinate substrate: Tyr-76, Tyr-179, and Leu-200.

It belongs to the pseudouridine synthase TruB family. Type 1 subfamily.

It carries out the reaction uridine(55) in tRNA = pseudouridine(55) in tRNA. Functionally, responsible for synthesis of pseudouridine from uracil-55 in the psi GC loop of transfer RNAs. The sequence is that of tRNA pseudouridine synthase B from Yersinia enterocolitica serotype O:8 / biotype 1B (strain NCTC 13174 / 8081).